Reading from the N-terminus, the 469-residue chain is Probable Xaa-Pro aminopeptidase PEPP (469 aa).

Positions 257, 268, 391, and 436 each coordinate Mn(2+).

It belongs to the peptidase M24B family. It depends on Mn(2+) as a cofactor.

It carries out the reaction Release of any N-terminal amino acid, including proline, that is linked to proline, even from a dipeptide or tripeptide.. Catalyzes the removal of a penultimate prolyl residue from the N-termini of peptides. The chain is Probable Xaa-Pro aminopeptidase PEPP (PEPP) from Fusarium vanettenii (strain ATCC MYA-4622 / CBS 123669 / FGSC 9596 / NRRL 45880 / 77-13-4) (Fusarium solani subsp. pisi).